The primary structure comprises 302 residues: D-alanine--D-alanine ligase (302 aa).

Residues 104–296 enclose the ATP-grasp domain; it reads KLVFERFAIP…FPDLVTWLVE (193 aa). 130 to 183 lines the ATP pocket; it reads AMARPYVVKPLDQGSSVGVTIVTSETNDLPFSRDDWPYGRQVMVERFIPGRELT. Mg(2+) is bound by residues Asp251, Glu263, and Asn265.

It belongs to the D-alanine--D-alanine ligase family. Mg(2+) is required as a cofactor. Requires Mn(2+) as cofactor.

The protein localises to the cytoplasm. It carries out the reaction 2 D-alanine + ATP = D-alanyl-D-alanine + ADP + phosphate + H(+). Its pathway is cell wall biogenesis; peptidoglycan biosynthesis. Its function is as follows. Cell wall formation. The polypeptide is D-alanine--D-alanine ligase (Rhodospirillum rubrum (strain ATCC 11170 / ATH 1.1.1 / DSM 467 / LMG 4362 / NCIMB 8255 / S1)).